A 156-amino-acid chain; its full sequence is Small ribosomal subunit protein uS7 (156 aa).

Belongs to the universal ribosomal protein uS7 family. In terms of assembly, part of the 30S ribosomal subunit. Contacts proteins S9 and S11.

Its function is as follows. One of the primary rRNA binding proteins, it binds directly to 16S rRNA where it nucleates assembly of the head domain of the 30S subunit. Is located at the subunit interface close to the decoding center, probably blocks exit of the E-site tRNA. The protein is Small ribosomal subunit protein uS7 of Trichormus variabilis (strain ATCC 29413 / PCC 7937) (Anabaena variabilis).